Here is a 90-residue protein sequence, read N- to C-terminus: DNA-binding protein HU (90 aa).

The segment at 57–90 (ARKGVNPQTRKPITIPERKVPKFKPGKALKEKVK) is disordered.

Belongs to the bacterial histone-like protein family.

Its function is as follows. Histone-like DNA-binding protein which is capable of wrapping DNA to stabilize it, and thus to prevent its denaturation under extreme environmental conditions. The sequence is that of DNA-binding protein HU (hup) from Thermotoga maritima (strain ATCC 43589 / DSM 3109 / JCM 10099 / NBRC 100826 / MSB8).